The sequence spans 65 residues: Muscarinic toxin 3 (65 aa).

4 disulfides stabilise this stretch: cysteine 3/cysteine 24, cysteine 17/cysteine 42, cysteine 46/cysteine 57, and cysteine 58/cysteine 63.

This sequence belongs to the three-finger toxin family. Short-chain subfamily. Aminergic toxin sub-subfamily. As to expression, expressed by the venom gland.

The protein localises to the secreted. Potent antagonist (IC(50)=1-10 nM) of M4 (CHRM4) muscarinic receptors, and CHRM1, ADRA1A, ADRA2A and ADRA2C adrenergic receptors. Also antagonises ADRA1B and ADRA1D adrenergic receptors with a 10-times lower affinity. The polypeptide is Muscarinic toxin 3 (Dendroaspis angusticeps (Eastern green mamba)).